The chain runs to 253 residues: Uridylate kinase (253 aa).

26–29 (KLSG) is an ATP binding site. Position 68 (Gly68) interacts with UMP. Residues Gly69 and Arg73 each coordinate ATP. UMP is bound by residues Asp88 and 149-156 (TGNPFFTT). Positions 176, 182, and 185 each coordinate ATP.

Belongs to the UMP kinase family. Homohexamer.

It localises to the cytoplasm. The enzyme catalyses UMP + ATP = UDP + ADP. It functions in the pathway pyrimidine metabolism; CTP biosynthesis via de novo pathway; UDP from UMP (UMPK route): step 1/1. Inhibited by UTP. Functionally, catalyzes the reversible phosphorylation of UMP to UDP. The sequence is that of Uridylate kinase from Chromohalobacter salexigens (strain ATCC BAA-138 / DSM 3043 / CIP 106854 / NCIMB 13768 / 1H11).